The sequence spans 543 residues: MITKLFFHQVGDNKKRLIWYWKLLIIIAVLAIVIYSWIDNFSSFNQFGLNVFINNITSLFTPNLNHEYTLVRFLAQTAFFVTGGSFLGFIFAILFSYWTAFKIQPFYIALPIRLITIVLRAFPVLLFGFLFSNLFNKQLAATLTISWFSFLWNTKYITTFFENSNLKYFFNKKIREGSGFKAFWTTIFLSENERLWLFFLYSLEANFRWTTLLSIFGIGGIGQLIVDPLSIRVQFDLVLIPLVVLITFLIFIEVVVFLLSSFVFEKNSEDLRPILKTTVIEKRKWKRIIFILFIVVLISLSLANLVTIDYRINDAEFLQDFFNQFFQLKSNLFSSNDPNINPILMLVKLTTQAISLISLVVIFSILFGFISCNLFKKRFSISFKILLLFVRVVPSILLFRLLDPLFLEAKTTIILVLLINHGSSYGQLMSINFNKANQNIINNYKNHGMTKGFILWNYLLVENKPNLINITSDAYDSVIRDLILFGSFGGSIIGSRITNFFERAQFDNLGSVTIPLMVYLIAIEIIFLSVRLTRISVFKNYLY.

The next 12 helical transmembrane spans lie at 18-38 (IWYW…YSWI), 78-98 (AFFV…FSYW), 115-135 (ITIV…SNLF), 141-161 (ATLT…TTFF), 211-231 (TLLS…PLSI), 237-257 (LVLI…VVVF), 288-308 (IIFI…LVTI), 354-374 (ISLI…SCNL), 379-399 (FSIS…ILLF), 413-433 (IILV…SINF), 482-502 (LILF…NFFE), and 510-530 (GSVT…FLSV). One can recognise an ABC transmembrane type-1 domain in the interval 74-256 (LAQTAFFVTG…TFLIFIEVVV (183 aa)).

The protein belongs to the binding-protein-dependent transport system permease family.

The protein localises to the cell membrane. Probably part of a high-affinity transport system. The sequence is that of ABC transport system permease protein p69 (p69) from Mycoplasma genitalium (strain ATCC 33530 / DSM 19775 / NCTC 10195 / G37) (Mycoplasmoides genitalium).